The sequence spans 69 residues: U2-agatoxin-Ao1e (69 aa).

The first 20 residues, 1–20, serve as a signal peptide directing secretion; that stretch reads MRAIISVLLISAMVFSIIEA. The propeptide occupies 21–34; that stretch reads VPLEEGLQLFEAER. Intrachain disulfides connect Cys-37/Cys-53, Cys-44/Cys-58, and Cys-52/Cys-68.

Belongs to the neurotoxin 01 (U2-agtx) family. Expressed by the venom gland.

Its subcellular location is the secreted. Its function is as follows. Insect active toxin causing rapid but reversible paralysis in crickets. No activity shown in mammals. Does not show effect on mammalian voltage-gated calcium channels. In Agelena orientalis (Funnel-web spider), this protein is U2-agatoxin-Ao1e.